The following is a 649-amino-acid chain: Acetyl-coenzyme A synthetase (649 aa).

CoA-binding positions include 198–201 (RRGK), threonine 317, and asparagine 341. ATP-binding positions include 393-395 (GEP), 417-422 (DTWWQT), aspartate 506, and arginine 521. Position 529 (serine 529) interacts with CoA. Arginine 532 provides a ligand contact to ATP. The Mg(2+) site is built by valine 543, histidine 545, and valine 548. Lysine 612 carries the N6-acetyllysine modification. The interval 625–649 (QPVQGDTSTLEDPTVLERLQASPAL) is disordered.

This sequence belongs to the ATP-dependent AMP-binding enzyme family. Mg(2+) is required as a cofactor. Post-translationally, acetylated. Deacetylation by the SIR2-homolog deacetylase activates the enzyme.

The catalysed reaction is acetate + ATP + CoA = acetyl-CoA + AMP + diphosphate. In terms of biological role, catalyzes the conversion of acetate into acetyl-CoA (AcCoA), an essential intermediate at the junction of anabolic and catabolic pathways. AcsA undergoes a two-step reaction. In the first half reaction, AcsA combines acetate with ATP to form acetyl-adenylate (AcAMP) intermediate. In the second half reaction, it can then transfer the acetyl group from AcAMP to the sulfhydryl group of CoA, forming the product AcCoA. The chain is Acetyl-coenzyme A synthetase from Deinococcus radiodurans (strain ATCC 13939 / DSM 20539 / JCM 16871 / CCUG 27074 / LMG 4051 / NBRC 15346 / NCIMB 9279 / VKM B-1422 / R1).